The following is a 157-amino-acid chain: Protein-export protein SecB (157 aa).

The protein belongs to the SecB family. As to quaternary structure, homotetramer, a dimer of dimers. One homotetramer interacts with 1 SecA dimer.

It is found in the cytoplasm. In terms of biological role, one of the proteins required for the normal export of preproteins out of the cell cytoplasm. It is a molecular chaperone that binds to a subset of precursor proteins, maintaining them in a translocation-competent state. It also specifically binds to its receptor SecA. The polypeptide is Protein-export protein SecB (Shewanella frigidimarina (strain NCIMB 400)).